Consider the following 216-residue polypeptide: Probable nicotinate-nucleotide adenylyltransferase (216 aa).

Belongs to the NadD family.

The enzyme catalyses nicotinate beta-D-ribonucleotide + ATP + H(+) = deamido-NAD(+) + diphosphate. It participates in cofactor biosynthesis; NAD(+) biosynthesis; deamido-NAD(+) from nicotinate D-ribonucleotide: step 1/1. Functionally, catalyzes the reversible adenylation of nicotinate mononucleotide (NaMN) to nicotinic acid adenine dinucleotide (NaAD). The polypeptide is Probable nicotinate-nucleotide adenylyltransferase (Shewanella baltica (strain OS223)).